A 370-amino-acid chain; its full sequence is Chaperone protein DnaJ (370 aa).

The region spanning 6–70 (DFYEILGVSK…QKRANYDQFG (65 aa)) is the J domain. The CR-type zinc finger occupies 134-216 (GANKSVTLNV…CHGKGFNTKR (83 aa)). Residues C147, C150, C164, C167, C190, C193, C204, and C207 each coordinate Zn(2+). CXXCXGXG motif repeat units follow at residues 147–154 (CTSCHGSG), 164–171 (CSRCGGTG), 190–197 (CPDCGGSG), and 204–211 (CGECHGKG).

The protein belongs to the DnaJ family. In terms of assembly, homodimer. The cofactor is Zn(2+).

The protein localises to the cytoplasm. Functionally, participates actively in the response to hyperosmotic and heat shock by preventing the aggregation of stress-denatured proteins and by disaggregating proteins, also in an autonomous, DnaK-independent fashion. Unfolded proteins bind initially to DnaJ; upon interaction with the DnaJ-bound protein, DnaK hydrolyzes its bound ATP, resulting in the formation of a stable complex. GrpE releases ADP from DnaK; ATP binding to DnaK triggers the release of the substrate protein, thus completing the reaction cycle. Several rounds of ATP-dependent interactions between DnaJ, DnaK and GrpE are required for fully efficient folding. Also involved, together with DnaK and GrpE, in the DNA replication of plasmids through activation of initiation proteins. This chain is Chaperone protein DnaJ, found in Erysipelothrix rhusiopathiae.